The primary structure comprises 366 residues: Phospho-N-acetylmuramoyl-pentapeptide-transferase (366 aa).

10 helical membrane passes run 27–47 (AALFTSALIVFLFGPAMIASL), 71–91 (TPTMGGLMILAGIVVSSLLWA), 93–113 (LSSIYVVSTLLVTLGFGAIGF), 138–158 (FVIASIAVFFMMQAALSAGAA), 174–194 (LMLNLGYFFVLFGGFVIVGAG), 205–225 (GLAIVPVMIASAAFGLIAYLA), 245–265 (LAVILGAVIGAGLGFLWFNAP), 268–288 (AIFMGDTGSLALGGLIGTVAV), 297–317 (VIIGGLFVMETLSVIIQVFWF), and 343–363 (QVVIRFWIIAVILAMVGLSTL).

It belongs to the glycosyltransferase 4 family. MraY subfamily. Mg(2+) serves as cofactor.

The protein resides in the cell inner membrane. The enzyme catalyses UDP-N-acetyl-alpha-D-muramoyl-L-alanyl-gamma-D-glutamyl-meso-2,6-diaminopimeloyl-D-alanyl-D-alanine + di-trans,octa-cis-undecaprenyl phosphate = di-trans,octa-cis-undecaprenyl diphospho-N-acetyl-alpha-D-muramoyl-L-alanyl-D-glutamyl-meso-2,6-diaminopimeloyl-D-alanyl-D-alanine + UMP. It participates in cell wall biogenesis; peptidoglycan biosynthesis. Its function is as follows. Catalyzes the initial step of the lipid cycle reactions in the biosynthesis of the cell wall peptidoglycan: transfers peptidoglycan precursor phospho-MurNAc-pentapeptide from UDP-MurNAc-pentapeptide onto the lipid carrier undecaprenyl phosphate, yielding undecaprenyl-pyrophosphoryl-MurNAc-pentapeptide, known as lipid I. The polypeptide is Phospho-N-acetylmuramoyl-pentapeptide-transferase (Sinorhizobium medicae (strain WSM419) (Ensifer medicae)).